The following is a 347-amino-acid chain: N-acetyl-gamma-glutamyl-phosphate reductase (347 aa).

The active site involves cysteine 152.

The protein belongs to the NAGSA dehydrogenase family. Type 1 subfamily.

It localises to the cytoplasm. It catalyses the reaction N-acetyl-L-glutamate 5-semialdehyde + phosphate + NADP(+) = N-acetyl-L-glutamyl 5-phosphate + NADPH + H(+). Its pathway is amino-acid biosynthesis; L-arginine biosynthesis; N(2)-acetyl-L-ornithine from L-glutamate: step 3/4. Functionally, catalyzes the NADPH-dependent reduction of N-acetyl-5-glutamyl phosphate to yield N-acetyl-L-glutamate 5-semialdehyde. The polypeptide is N-acetyl-gamma-glutamyl-phosphate reductase (Neisseria gonorrhoeae (strain NCCP11945)).